We begin with the raw amino-acid sequence, 398 residues long: Cytochrome b (398 aa).

4 helical membrane-spanning segments follow: residues 33–53, 77–98, 113–133, and 178–198; these read FGSL…FLAM, WLIR…YLHI, WNIG…GYVL, and FFAF…IHLL. H83 and H97 together coordinate heme b. Residues H182 and H196 each contribute to the heme b site. Residue H201 participates in a ubiquinone binding. The next 4 membrane-spanning stretches (helical) occupy residues 226–246, 288–308, 320–340, and 347–367; these read YKDL…SLFA, LGGV…PILH, FTQL…WIGG, and YVVI…FLIP.

This sequence belongs to the cytochrome b family. As to quaternary structure, the cytochrome bc1 complex contains 3 respiratory subunits (MT-CYB, CYC1 and UQCRFS1), 2 core proteins (UQCRC1 and UQCRC2) and probably 6 low-molecular weight proteins. It depends on heme b as a cofactor.

The protein localises to the mitochondrion inner membrane. Component of the ubiquinol-cytochrome c reductase complex (complex III or cytochrome b-c1 complex) that is part of the mitochondrial respiratory chain. The b-c1 complex mediates electron transfer from ubiquinol to cytochrome c. Contributes to the generation of a proton gradient across the mitochondrial membrane that is then used for ATP synthesis. In Channa asiatica (Small snakehead), this protein is Cytochrome b (mt-cyb).